Here is a 122-residue protein sequence, read N- to C-terminus: Structural protein p14.5 (122 aa).

2 disordered regions span residues 1-27 (MADF…LEYD) and 73-122 (EDNN…HKSK). The residue at position 2 (alanine 2) is an N-acetylalanine; by host. The span at 105 to 122 (KPKKKKHLFPKLSSHKSK) shows a compositional bias: basic residues.

Belongs to the asfivirus structural protein p14.5 family. In terms of assembly, interacts with the major capsid protein. Interacts with host IRF3; this interaction interferes with the recruitment of IRF3 to TBK1. In terms of processing, acetylated.

It is found in the virion. In terms of biological role, structural protein required for transport of intracellular particles from the assembly sites to the plasma membrane. Binds to both ssDNA and dsDNA. Suppressed the activation of the cGAS/STING pathway by interfering with the recruitment of IRF3 to TBK1, which in turn suppresses IRF3 phosphorylation, decreasing interferon production. The chain is Structural protein p14.5 from African swine fever virus (isolate Warthog/Namibia/Wart80/1980) (ASFV).